We begin with the raw amino-acid sequence, 258 residues long: 5-oxoprolinase subunit A (258 aa).

The protein belongs to the LamB/PxpA family. In terms of assembly, forms a complex composed of PxpA, PxpB and PxpC.

The enzyme catalyses 5-oxo-L-proline + ATP + 2 H2O = L-glutamate + ADP + phosphate + H(+). Catalyzes the cleavage of 5-oxoproline to form L-glutamate coupled to the hydrolysis of ATP to ADP and inorganic phosphate. This is 5-oxoprolinase subunit A from Deinococcus radiodurans (strain ATCC 13939 / DSM 20539 / JCM 16871 / CCUG 27074 / LMG 4051 / NBRC 15346 / NCIMB 9279 / VKM B-1422 / R1).